The chain runs to 969 residues: RNA polymerase-associated protein RapA (969 aa).

In terms of domain architecture, Helicase ATP-binding spans 164–334; it reads EVGRRHAPRV…FARLRLLDPD (171 aa). 177-184 lines the ATP pocket; sequence DEVGLGKT. A DEAH box motif is present at residues 280–283; sequence DEAH. Residues 492 to 646 form the Helicase C-terminal domain; the sequence is RVNWLLEKVK…TCPTGRAVYD (155 aa).

The protein belongs to the SNF2/RAD54 helicase family. RapA subfamily. Interacts with the RNAP. Has a higher affinity for the core RNAP than for the holoenzyme. Its ATPase activity is stimulated by binding to RNAP.

Functionally, transcription regulator that activates transcription by stimulating RNA polymerase (RNAP) recycling in case of stress conditions such as supercoiled DNA or high salt concentrations. Probably acts by releasing the RNAP, when it is trapped or immobilized on tightly supercoiled DNA. Does not activate transcription on linear DNA. Probably not involved in DNA repair. In Vibrio campbellii (strain ATCC BAA-1116), this protein is RNA polymerase-associated protein RapA.